A 96-amino-acid polypeptide reads, in one-letter code: Neutrophil defensin 1 (96 aa).

Positions 1–19 (MRTLVILAAILLVALQAQA) are cleaved as a signal peptide. Residues 20–66 (EPLQARTDEATAAQEQIPTDNPEVVVSLAWDESLAPKDSVPGLRKNM) constitute a propeptide that is removed on maturation. 3 disulfides stabilise this stretch: cysteine 68/cysteine 96, cysteine 70/cysteine 85, and cysteine 75/cysteine 95. Tyrosine 87 carries the phosphotyrosine modification.

In terms of assembly, tetramer. Dimer. Interacts with RETN. ADP-ribosylation drastically reduces cytotoxic and antibacterial activities, and enhances IL8 production.

It localises to the secreted. Effector molecule of the innate immune system that acts via antibiotic-like properties against a broad array of infectious agents including bacteria, fungi, and viruses or by promoting the activation and maturation of some APCs. Interacts with the essential precursor of cell wall synthesis lipid II to inhibit bacterial cell wall synthesis. Inhibits adenovirus infection via inhibition of viral disassembly at the vertex region, thereby restricting the release of internal capsid protein pVI, which is required for endosomal membrane penetration during cell entry. In addition, interaction with adenovirus capsid leads to the redirection of viral particles to TLR4 thereby promoting a NLRP3-mediated inflammasome response and interleukin 1-beta (IL-1beta) release. Induces the production of proinflammatory cytokines including type I interferon (IFN) in plasmacytoid dendritic cells (pDCs) by triggering the degradation of NFKBIA and nuclear translocation of IRF1, both of which are required for activation of pDCs. The polypeptide is Neutrophil defensin 1 (Macaca mulatta (Rhesus macaque)).